We begin with the raw amino-acid sequence, 335 residues long: Ferrochelatase (335 aa).

The Fe cation site is built by histidine 211 and glutamate 290.

This sequence belongs to the ferrochelatase family.

It is found in the cytoplasm. It catalyses the reaction heme b + 2 H(+) = protoporphyrin IX + Fe(2+). Its pathway is porphyrin-containing compound metabolism; protoheme biosynthesis; protoheme from protoporphyrin-IX: step 1/1. In terms of biological role, catalyzes the ferrous insertion into protoporphyrin IX. The chain is Ferrochelatase from Sulfurihydrogenibium sp. (strain YO3AOP1).